A 301-amino-acid polypeptide reads, in one-letter code: tRNA dimethylallyltransferase (301 aa).

8–15 (GATGTGKS) provides a ligand contact to ATP. 10–15 (TGTGKS) serves as a coordination point for substrate. The interval 33–36 (DSMQ) is interaction with substrate tRNA.

The protein belongs to the IPP transferase family. As to quaternary structure, monomer. Mg(2+) is required as a cofactor.

The catalysed reaction is adenosine(37) in tRNA + dimethylallyl diphosphate = N(6)-dimethylallyladenosine(37) in tRNA + diphosphate. Functionally, catalyzes the transfer of a dimethylallyl group onto the adenine at position 37 in tRNAs that read codons beginning with uridine, leading to the formation of N6-(dimethylallyl)adenosine (i(6)A). The sequence is that of tRNA dimethylallyltransferase from Tropheryma whipplei (strain Twist) (Whipple's bacillus).